The sequence spans 363 residues: Serpentine receptor class beta-18 (363 aa).

A run of 7 helical transmembrane segments spans residues 52–72, 92–112, 135–155, 172–192, 218–238, 276–296, and 303–323; these read LAQF…VVYI, MLLF…YHII, FRYT…CIYI, LILA…IIWV, KATI…IGLF, AALM…YNFL, and TIAT…LVIV.

This sequence belongs to the nematode receptor-like protein srb family.

It localises to the membrane. This Caenorhabditis elegans protein is Serpentine receptor class beta-18 (srb-18).